Here is a 360-residue protein sequence, read N- to C-terminus: Dihydroorotate dehydrogenase (quinone) (360 aa).

FMN is bound by residues 66–70 and threonine 90; that span reads AGFDK. Residue lysine 70 coordinates substrate. A substrate-binding site is contributed by 115–119; the sequence is NRMGF. Asparagine 143 and asparagine 176 together coordinate FMN. Asparagine 176 contributes to the substrate binding site. Serine 179 acts as the Nucleophile in catalysis. Asparagine 181 serves as a coordination point for substrate. The FMN site is built by lysine 212 and threonine 240. 241–242 is a substrate binding site; it reads NT. Residues glycine 264, glycine 293, and 314-315 each bind FMN; that span reads YT.

It belongs to the dihydroorotate dehydrogenase family. Type 2 subfamily. In terms of assembly, monomer. It depends on FMN as a cofactor.

Its subcellular location is the cell membrane. It carries out the reaction (S)-dihydroorotate + a quinone = orotate + a quinol. It participates in pyrimidine metabolism; UMP biosynthesis via de novo pathway; orotate from (S)-dihydroorotate (quinone route): step 1/1. Its function is as follows. Catalyzes the conversion of dihydroorotate to orotate with quinone as electron acceptor. This chain is Dihydroorotate dehydrogenase (quinone), found in Mycobacterium ulcerans (strain Agy99).